Consider the following 575-residue polypeptide: MEEAINNVLLLLREDSISLETVLWETHYVLLNLHNEQNLRLVVAQLIACGRIWDYWNEHRSEYFAFWVELISRKKVTNNGLPFSSFVKSIVGILEVDASNEILCFRRICLLCVFYKLLSCDHIVNLQYPLKRAVSKALSKQIKTHQFSGFEANFLLQQLFASVDSSASDISFDAFSLLPHLLKWEEIVWSGFINYLDTEHKRDSLPTAVLCHLLLRLSTYQQISIIKRLITLIDKAIPSWKSRSSDSKYNDHQFVKKNFFSIIMVLESLAKSQYRKSNVLAADRSLCEYIILTLFHMEYLFSFVASSWSTLDFVITTCLSRVAQPAKFISETVREAIIDSIQLEGYVDLQKLSGSPVLVTLSFINNWQNLICRRLEKQTVNEKVITLSSTAKEISSLGLSFAEKLISQSDESTLCKHYVYASLYACLFCNLNEGSPKDYLDNDIYVHARCLFLLTKTLNLDSLKSILCSRVRLYYNIEIAYYFTDVLLKWFQPIIRYEFDNALIFYKASISLVSVLAPAAQKQFLSNYLNSIQGFSTETKEDLIFLVSSQIRQMPYQNATSLLSFWLSIVVGRAV.

The protein localises to the cytoplasm. The protein resides in the cytoskeleton. It is found in the microtubule organizing center. It localises to the spindle pole body. This is an uncharacterized protein from Schizosaccharomyces pombe (strain 972 / ATCC 24843) (Fission yeast).